The primary structure comprises 652 residues: DNA ligase (652 aa).

NAD(+) contacts are provided by residues 29–33 (DSDYD), 78–79 (SL), and Glu107. The active-site N6-AMP-lysine intermediate is Lys109. NAD(+)-binding residues include Arg130, Glu164, Lys278, and Lys302. Residues Cys395, Cys398, Cys413, and Cys418 each coordinate Zn(2+). Residues 577–652 (NSDAALFGLT…IEDEDWLRQL (76 aa)) enclose the BRCT domain.

Belongs to the NAD-dependent DNA ligase family. LigA subfamily. Mg(2+) serves as cofactor. The cofactor is Mn(2+).

The enzyme catalyses NAD(+) + (deoxyribonucleotide)n-3'-hydroxyl + 5'-phospho-(deoxyribonucleotide)m = (deoxyribonucleotide)n+m + AMP + beta-nicotinamide D-nucleotide.. DNA ligase that catalyzes the formation of phosphodiester linkages between 5'-phosphoryl and 3'-hydroxyl groups in double-stranded DNA using NAD as a coenzyme and as the energy source for the reaction. It is essential for DNA replication and repair of damaged DNA. In Streptococcus pyogenes serotype M1, this protein is DNA ligase.